Here is a 484-residue protein sequence, read N- to C-terminus: MNILLAASEVAPFAKTGGLADVAGALPQELHRLGHDVRIIMPLYRSVRKQHLSLQHLGELPAVKMGDAIRTGRLWQGSLQDVPVYFLEQDDYFDRDGLYGTSQNDYPDNAERFGFFGRGLLAALPQIGFKPEILHLNDWQTGLVPALLRTEWAEDPFYAGTATMTTIHNLGYQGLFPAETVATLGLDPALYTMEGLEYYDQVSFLKSGLVYADMITTVSETYCAEIQTPQMGHGFDGILHARAARLFGVLNGIDDKLWNPQCDPALTAPYSVDDLEGKAANKRQLQKQLGLSCDADVPLLTMVTRLASQKGLDLVEQAWEQLLQRGVQLVILGSGDQDFMDRFAQLGAQHPTQTAVRLGFDDRLARLIYAGSDMFLMPSHYEPCGLGQLIALRYGSVPVVRKTGGLADTVFDPQDQATQANGFTFREISPSAMLAALDRALALYRQPEGWKQLVRRGMQGDFSWRQSALRYVELYRKAVELHHA.

Lys-15 is an ADP-alpha-D-glucose binding site.

It belongs to the glycosyltransferase 1 family. Bacterial/plant glycogen synthase subfamily.

The catalysed reaction is [(1-&gt;4)-alpha-D-glucosyl](n) + ADP-alpha-D-glucose = [(1-&gt;4)-alpha-D-glucosyl](n+1) + ADP + H(+). It participates in glycan biosynthesis; glycogen biosynthesis. Functionally, synthesizes alpha-1,4-glucan chains using ADP-glucose. This Syntrophotalea carbinolica (strain DSM 2380 / NBRC 103641 / GraBd1) (Pelobacter carbinolicus) protein is Glycogen synthase.